A 594-amino-acid polypeptide reads, in one-letter code: Cytoplasmic polyadenylation element-binding protein 2 (594 aa).

The segment covering 72-90 (KEREKVDEEKEGVERREEN) has biased composition (basic and acidic residues). Disordered regions lie at residues 72–91 (KERE…EENG) and 367–388 (GGGF…STSE). Over residues 367–378 (GGGFNSGSGSGN) the composition is skewed to gly residues. The 83-residue stretch at 458 to 540 (LVAFIGGVPR…KRVEIKPYFF (83 aa)) folds into the RRM domain.

Functionally, cytoplasmic polyadenylation element binding protein that binds to and regulates the translation of specific mRNAs. The polypeptide is Cytoplasmic polyadenylation element-binding protein 2 (cpb-2) (Caenorhabditis japonica).